A 170-amino-acid polypeptide reads, in one-letter code: MIDADGFRPNVGIILTDDQGRLLWARRVGGQDAWQFPQGGIKHNESPENALYRELEEEVGLCKADVEVLGVTQGWLRYRLPRRLVRDKEPKCVGQKQKWYLLRLVSNDSAIRLDASSPAEFDTWNWVSYWYPLGKVVAFKRDVYRRALKELSPVYNQYFLSTLGEGRALC.

The region spanning 6 to 149 (GFRPNVGIIL…KRDVYRRALK (144 aa)) is the Nudix hydrolase domain. Positions 39 to 60 (GGIKHNESPENALYRELEEEVG) match the Nudix box motif.

Belongs to the Nudix hydrolase family. RppH subfamily. A divalent metal cation is required as a cofactor.

Accelerates the degradation of transcripts by removing pyrophosphate from the 5'-end of triphosphorylated RNA, leading to a more labile monophosphorylated state that can stimulate subsequent ribonuclease cleavage. This Saccharophagus degradans (strain 2-40 / ATCC 43961 / DSM 17024) protein is RNA pyrophosphohydrolase.